Consider the following 451-residue polypeptide: Probable beta-1,4-xylosyltransferase GT43E (451 aa).

Residues 1–88 (MVSSRRNTGG…SKSRGLSCKR (88 aa)) are Cytoplasmic-facing. Residues 89–109 (LAFHLFVCFMVGIFIGFMPFF) form a helical; Signal-anchor for type II membrane protein membrane-spanning segment. At 110-451 (SVDVSQKIVS…KNLDAVIPVT (342 aa)) the chain is on the lumenal side. N-linked (GlcNAc...) asparagine glycosylation is found at N260 and N366.

The protein belongs to the glycosyltransferase 43 family.

The protein resides in the golgi apparatus membrane. In terms of biological role, probable beta-1,4-xylosyltransferase involved in xylan biosynthesis in cell walls. This chain is Probable beta-1,4-xylosyltransferase GT43E, found in Oryza sativa subsp. japonica (Rice).